A 173-amino-acid polypeptide reads, in one-letter code: DNA N-6-adenine-methyltransferase (173 aa).

This sequence belongs to the N(4)/N(6)-methyltransferase family.

The enzyme catalyses a 2'-deoxyadenosine in DNA + S-adenosyl-L-methionine = an N(6)-methyl-2'-deoxyadenosine in DNA + S-adenosyl-L-homocysteine + H(+). Methyltransferase that methylates adenine residues in the ssDNA and dsDNA sequence 5'-GATC-3'. May prevent degradation of viral DNA by the host restriction-modification antiviral defense system. This chain is DNA N-6-adenine-methyltransferase, found in Haemophilus influenzae (Bacteriophage HP1).